Reading from the N-terminus, the 278-residue chain is Undecaprenyl-diphosphatase 1 (278 aa).

The next 5 membrane-spanning stretches (helical) occupy residues 85-105 (LNVIIATIPAIVLGLLFEKTI), 108-128 (ALFSPVPVAFALVAGGVVILW), 188-208 (VATEFSFFLAIPIIFGATAYE), 218-238 (VDALGTFALGFVAAFVSAFAC), and 254-274 (FAWYRIGFGLLILLVGYSGAL).

Belongs to the UppP family.

It localises to the cell inner membrane. The enzyme catalyses di-trans,octa-cis-undecaprenyl diphosphate + H2O = di-trans,octa-cis-undecaprenyl phosphate + phosphate + H(+). In terms of biological role, catalyzes the dephosphorylation of undecaprenyl diphosphate (UPP). Confers resistance to bacitracin. This Paraburkholderia xenovorans (strain LB400) protein is Undecaprenyl-diphosphatase 1.